The following is a 1058-amino-acid chain: Isoleucine--tRNA ligase (1058 aa).

Residues 48 to 58 (PYTTGHIHLGT) carry the 'HIGH' region motif. Residues 596-600 (KMSKS) carry the 'KMSKS' region motif. An ATP-binding site is contributed by Lys-599.

This sequence belongs to the class-I aminoacyl-tRNA synthetase family. IleS type 2 subfamily. As to quaternary structure, monomer. It depends on Zn(2+) as a cofactor.

It localises to the cytoplasm. It carries out the reaction tRNA(Ile) + L-isoleucine + ATP = L-isoleucyl-tRNA(Ile) + AMP + diphosphate. Catalyzes the attachment of isoleucine to tRNA(Ile). As IleRS can inadvertently accommodate and process structurally similar amino acids such as valine, to avoid such errors it has two additional distinct tRNA(Ile)-dependent editing activities. One activity is designated as 'pretransfer' editing and involves the hydrolysis of activated Val-AMP. The other activity is designated 'posttransfer' editing and involves deacylation of mischarged Val-tRNA(Ile). The chain is Isoleucine--tRNA ligase from Methanosarcina acetivorans (strain ATCC 35395 / DSM 2834 / JCM 12185 / C2A).